A 384-amino-acid chain; its full sequence is Dual specificity protein phosphatase 5 (384 aa).

Residues 19-141 (AAARCVVLDC…FYSEYPECCV (123 aa)) enclose the Rhodanese domain. The Nuclear localization signal motif lies at 53–74 (RRARGGAVSARYVLPDEAARAR). In terms of domain architecture, Tyrosine-protein phosphatase spans 178-319 (GPVEILPFLY…LLQYESEILP (142 aa)). The active-site Phosphocysteine intermediate is Cys263.

It belongs to the protein-tyrosine phosphatase family. Non-receptor class dual specificity subfamily.

The protein localises to the nucleus. It catalyses the reaction O-phospho-L-tyrosyl-[protein] + H2O = L-tyrosyl-[protein] + phosphate. The catalysed reaction is O-phospho-L-seryl-[protein] + H2O = L-seryl-[protein] + phosphate. The enzyme catalyses O-phospho-L-threonyl-[protein] + H2O = L-threonyl-[protein] + phosphate. In terms of biological role, dual specificity protein phosphatase; active with phosphotyrosine, phosphoserine and phosphothreonine residues. The highest relative activity is toward ERK1. This Homo sapiens (Human) protein is Dual specificity protein phosphatase 5 (DUSP5).